We begin with the raw amino-acid sequence, 573 residues long: MANTLPPTDRSCDISQPLERLSPDESLKAESDYLRGTIALGLLDRITSAVPGNDIKLMKFHGIYEQDDREIRDERRRQKLEPAFQFMIRVRLPGGICTTERWLKISELACAHGNETLRMTTRQTFQFHWVLKQNIVPLIRGLHEVLLDTVAACGDDSRGVMATVNPQFPALQAELAALAKTVSDHVIPKTRAYHEIWYGEERIASSEPEEPFYGQTYMPRKFKIGFVIPPNNDIDIYAQDLGYIAIIGENGKIAGFNVAIGGGMGRTDKAPHTYPRTASVIGFITPDRLISVTEAVMGVQRDYGNRADRSRARFKYTIDDKGLDWIKLAIEDRAGPLESARPYDFTSNADIYGWIESGDGFHHFTLFIENGRLNRDMLDKIAQIAHVHKGHFRLTPNQNLMIANVATADKPEIEALLRETGLIAFNERSVLRLNSMACVALPTCGLAMADSERYLPDLITKIEGILTRYNLQNEPITLRMTGCPNGCSRPFIAEIGLTGRAPGKYNLYLGGGFHGQRLNRLYRENIGEPAILETLNEVLGRYATERLPDEHFGDFTIRAGIIREVTEGRFSND.

The [4Fe-4S] cluster site is built by Cys438, Cys444, Cys483, and Cys487. Cys487 is a siroheme binding site.

This sequence belongs to the nitrite and sulfite reductase 4Fe-4S domain family. In terms of assembly, alpha(8)-beta(8). The alpha component is a flavoprotein, the beta component is a hemoprotein. Siroheme is required as a cofactor. Requires [4Fe-4S] cluster as cofactor.

It carries out the reaction hydrogen sulfide + 3 NADP(+) + 3 H2O = sulfite + 3 NADPH + 4 H(+). Its pathway is sulfur metabolism; hydrogen sulfide biosynthesis; hydrogen sulfide from sulfite (NADPH route): step 1/1. Component of the sulfite reductase complex that catalyzes the 6-electron reduction of sulfite to sulfide. This is one of several activities required for the biosynthesis of L-cysteine from sulfate. This Nitrosomonas europaea (strain ATCC 19718 / CIP 103999 / KCTC 2705 / NBRC 14298) protein is Sulfite reductase [NADPH] hemoprotein beta-component.